Consider the following 433-residue polypeptide: UDP-N-acetylglucosamine 1-carboxyvinyltransferase (433 aa).

22 to 23 (KN) provides a ligand contact to phosphoenolpyruvate. Arg96 contributes to the UDP-N-acetyl-alpha-D-glucosamine binding site. Residue Cys120 is the Proton donor of the active site. Residue Cys120 is modified to 2-(S-cysteinyl)pyruvic acid O-phosphothioketal. UDP-N-acetyl-alpha-D-glucosamine contacts are provided by residues 125-129 (RPIDL), Asp308, and Ile330.

It belongs to the EPSP synthase family. MurA subfamily.

The protein resides in the cytoplasm. The catalysed reaction is phosphoenolpyruvate + UDP-N-acetyl-alpha-D-glucosamine = UDP-N-acetyl-3-O-(1-carboxyvinyl)-alpha-D-glucosamine + phosphate. It participates in cell wall biogenesis; peptidoglycan biosynthesis. Its function is as follows. Cell wall formation. Adds enolpyruvyl to UDP-N-acetylglucosamine. This Koribacter versatilis (strain Ellin345) protein is UDP-N-acetylglucosamine 1-carboxyvinyltransferase.